The chain runs to 514 residues: Lysine--tRNA ligase (514 aa).

A compositionally biased stretch (low complexity) spans 1–13; the sequence is MSKPNNQNQQNNQ. The segment at 1 to 21 is disordered; that stretch reads MSKPNNQNQQNNQEPAPEDAN. Mg(2+) contacts are provided by Glu-422 and Glu-429.

This sequence belongs to the class-II aminoacyl-tRNA synthetase family. In terms of assembly, homodimer. It depends on Mg(2+) as a cofactor.

It localises to the cytoplasm. The catalysed reaction is tRNA(Lys) + L-lysine + ATP = L-lysyl-tRNA(Lys) + AMP + diphosphate. The sequence is that of Lysine--tRNA ligase from Psychrobacter cryohalolentis (strain ATCC BAA-1226 / DSM 17306 / VKM B-2378 / K5).